Here is a 127-residue protein sequence, read N- to C-terminus: Protein KRTCAP2 homolog (127 aa).

A run of 4 helical transmembrane segments spans residues 13-33 (LISLILWVIIFALLNIGSNFF), 41-61 (ILGGFVGSFLFFLQMTFIGAI), 65-85 (VKLLETVLAVIITAMISSSVH), and 87-107 (VSGTTSIIFSIGWIFYLNHAS).

Belongs to the KRTCAP2 family. As to quaternary structure, component of the oligosaccharyltransferase (OST) complex.

It is found in the membrane. Functionally, subunit of the oligosaccharyl transferase (OST) complex that catalyzes the initial transfer of a defined glycan (Glc(3)Man(9)GlcNAc(2) in eukaryotes) from the lipid carrier dolichol-pyrophosphate to an asparagine residue within an Asn-X-Ser/Thr consensus motif in nascent polypeptide chains, the first step in protein N-glycosylation. N-glycosylation occurs cotranslationally and the complex associates with the Sec61 complex at the channel-forming translocon complex that mediates protein translocation across the endoplasmic reticulum (ER). All subunits are required for a maximal enzyme activity. This Dictyostelium discoideum (Social amoeba) protein is Protein KRTCAP2 homolog.